Reading from the N-terminus, the 142-residue chain is Large ribosomal subunit protein uL13 (142 aa).

This sequence belongs to the universal ribosomal protein uL13 family. As to quaternary structure, part of the 50S ribosomal subunit.

Functionally, this protein is one of the early assembly proteins of the 50S ribosomal subunit, although it is not seen to bind rRNA by itself. It is important during the early stages of 50S assembly. In Methylococcus capsulatus (strain ATCC 33009 / NCIMB 11132 / Bath), this protein is Large ribosomal subunit protein uL13.